An 87-amino-acid polypeptide reads, in one-letter code: DNA-directed RNA polymerase subunit omega (87 aa).

Belongs to the RNA polymerase subunit omega family. In terms of assembly, the RNAP catalytic core consists of 2 alpha, 1 beta, 1 beta' and 1 omega subunit. When a sigma factor is associated with the core the holoenzyme is formed, which can initiate transcription.

It catalyses the reaction RNA(n) + a ribonucleoside 5'-triphosphate = RNA(n+1) + diphosphate. In terms of biological role, promotes RNA polymerase assembly. Latches the N- and C-terminal regions of the beta' subunit thereby facilitating its interaction with the beta and alpha subunits. This chain is DNA-directed RNA polymerase subunit omega, found in Thioalkalivibrio sulfidiphilus (strain HL-EbGR7).